The primary structure comprises 326 residues: MCGMRGRVVARAVVVGCGVAGLSAAIALRERGFGVRVVAREPPERTTSAVAAAVWYPYRAYPEERVLSWGARTFEVFRGLAADPRTGVRLGEGVELLRRSAPGEPWWREAVSGFRRCREEELPPGCRGGYRFVAPVAEMPAYLAYLLDRLRGAGGTLELREVSSLEEAGEGADVVVNCSGVWARELARDPSVFPIRGQILRVANPGLERFVLDEENPAGLTYIVPRSGDCVLGGTAEEGRWSTEPDPATAEAILRRCSALEPRLRGARVLEHRAGLRPGRPEVRLELEELPGGTPCVHNYGHGGSGVTLSWGCAEEAAALAGAALS.

Residues Gly-18, Val-19, Thr-46, Thr-47, Ser-48, Ala-52, Ala-53, Val-162, and Ser-179 each coordinate FAD. D-proline-binding residues include Tyr-222 and Arg-277. Positions 222 and 277 each coordinate D-serine. Arg-277, Gly-303, Gly-304, Gly-306, and Thr-308 together coordinate FAD. Gly-304 is a binding site for D-proline. Gly-304 contributes to the D-serine binding site.

This sequence belongs to the DAMOX/DASOX family. In terms of assembly, monomer. Requires FAD as cofactor.

It localises to the cytoplasm. It is found in the secreted. Its subcellular location is the cell wall. It carries out the reaction a D-alpha-amino acid + O2 + H2O = a 2-oxocarboxylate + H2O2 + NH4(+). The catalysed reaction is D-valine + O2 + H2O = 3-methyl-2-oxobutanoate + H2O2 + NH4(+). It catalyses the reaction D-leucine + O2 + H2O = 4-methyl-2-oxopentanoate + H2O2 + NH4(+). The enzyme catalyses D-isoleucine + O2 + H2O = (R)-3-methyl-2-oxopentanoate + H2O2 + NH4(+). It carries out the reaction D-tyrosine + O2 + H2O = 3-(4-hydroxyphenyl)pyruvate + H2O2 + NH4(+). The catalysed reaction is D-threonine + O2 + H2O = (S)-3-hydroxy-2-oxobutanoate + H2O2 + NH4(+). Its activity is regulated as follows. Inhibited by benzoate and phenylmethylsulfonyl fluoride (PMSF). Weakly inhibited by anthranilate, crotonate, and the amino acid-modifying agents dithionitrobenzoic acid and diethyl pyrocarbonate. Not inhibited by malonate, meso-tartrate, D-malate, or the amino acid-modifying agents iodoacetic acid or butane-2,3-dione. Its function is as follows. Catalyzes the oxidative deamination of D-amino acids with broad substrate specificity. This chain is D-amino-acid oxidase, found in Rubrobacter xylanophilus (strain DSM 9941 / JCM 11954 / NBRC 16129 / PRD-1).